Reading from the N-terminus, the 526-residue chain is Microphthalmia-associated transcription factor (526 aa).

Position 5 is a phosphoserine; by MTOR (S5). Disordered stretches follow at residues 20–54 (EPKT…STMT) and 155–179 (VLSS…SAPN). The span at 34 to 44 (SSSSAEHSGAS) shows a compositional bias: low complexity. A Phosphoserine; by MAPK modification is found at S180. A transactivation region spans residues 224–291 (DDVIDDIISL…PANLPNIKRE (68 aa)). S280 is subject to Phosphoserine. Residue K289 forms a Glycyl lysine isopeptide (Lys-Gly) (interchain with G-Cter in SUMO) linkage. Positions 311–364 (QKKDNHNLIERRRRFNINDRIKELGTLIPKSNDPDMRWNKGTILKASVDYIRKL) constitute a bHLH domain. Residues 355–401 (KASVDYIRKLQREQQRAKDLENRQKKLEHANRHLLLRVQELEMQARA) are a coiled coil. Positions 374–395 (LENRQKKLEHANRHLLLRVQEL) are leucine-zipper. A DNA-binding regulation region spans residues 401 to 431 (AHGLSLIPSTGLCSPDLVNRIIKQEPVLENC). Position 405 is a phosphoserine; by GSK3 (S405). S414 is modified (phosphoserine). K423 participates in a covalent cross-link: Glycyl lysine isopeptide (Lys-Gly) (interchain with G-Cter in SUMO). S491 bears the Phosphoserine mark. Residues 496–526 (TDPLLSSVSPGASKTSSRRSSMSAEETEHAC) form a disordered region. Over residues 507–519 (ASKTSSRRSSMSA) the composition is skewed to low complexity. S516 carries the post-translational modification Phosphoserine; by RPS6KA1.

This sequence belongs to the MiT/TFE family. Homodimer or heterodimer; dimerization is mediated via the coiled coil region. Efficient DNA binding requires dimerization with another bHLH protein. Binds DNA in the form of homodimer or heterodimer with either TFE3, TFEB or TFEC. Interacts with small GTPases Rag (RagA/RRAGA, RagB/RRAGB, RagC/RRAGC and/or RagD/RRAGD); promoting its recruitment to lysosomal membrane in the presence of nutrients. Interacts with KARS1. Identified in a complex with HINT1 and CTNNB1. Interacts with VSX2. Post-translationally, when nutrients are present, phosphorylation by MTOR at Ser-5 via non-canonical mTORC1 pathway promotes ubiquitination by the SCF(BTRC) complex, followed by degradation. Phosphorylation at Ser-405 significantly enhances the ability to bind the tyrosinase promoter. Phosphorylation by MARK3/cTAK1 at Ser-280 promotes association with 14-3-3/YWHA adapters and retention in the cytosol. Phosphorylated at Ser-180 and Ser-516 following KIT signaling, triggering a short live activation: Phosphorylation at Ser-180 and Ser-516 by MAPK and RPS6KA1, respectively, activate the transcription factor activity but also promote ubiquitination and subsequent degradation by the proteasome. Phosphorylated in response to blue light (415nm). Ubiquitinated by the SCF(BTRC) and SCF(FBXW11) complexes following phosphorylation ar Ser-5 by MTOR, leading to its degradation by the proteasome. Ubiquitinated following phosphorylation at Ser-180, leading to subsequent degradation by the proteasome. Deubiquitinated by USP13, preventing its degradation. As to expression, in the adult, expressed at high levels in the heart, skin, skeletal muscle, intestine, stomach, kidney, ovary, lung, spleen and brain. In the embryo, expressed in developing eye, ear, skin and heart. Isoform M is expressed in melanocytes and also in the embryonic and adult heart while isoform A and isoform H are more widely expressed.

It localises to the nucleus. The protein resides in the cytoplasm. The protein localises to the lysosome membrane. In terms of biological role, transcription factor that acts as a master regulator of melanocyte survival and differentiation as well as melanosome biogenesis. Binds to M-boxes (5'-TCATGTG-3') and symmetrical DNA sequences (E-boxes) (5'-CACGTG-3') found in the promoter of pigmentation genes, such as tyrosinase (TYR). Involved in the cellular response to amino acid availability by acting downstream of MTOR: in the presence of nutrients, MITF phosphorylation by MTOR promotes its inactivation. Upon starvation or lysosomal stress, inhibition of MTOR induces MITF dephosphorylation, resulting in transcription factor activity. Plays an important role in melanocyte development by regulating the expression of tyrosinase (TYR) and tyrosinase-related protein 1 (TYRP1). Plays a critical role in the differentiation of various cell types, such as neural crest-derived melanocytes, mast cells, osteoclasts and optic cup-derived retinal pigment epithelium. The protein is Microphthalmia-associated transcription factor (Mitf) of Mus musculus (Mouse).